A 122-amino-acid chain; its full sequence is Large ribosomal subunit protein uL14c (122 aa).

Belongs to the universal ribosomal protein uL14 family. In terms of assembly, part of the 50S ribosomal subunit.

It is found in the plastid. It localises to the chloroplast. Its function is as follows. Binds to 23S rRNA. This chain is Large ribosomal subunit protein uL14c, found in Lotus japonicus (Lotus corniculatus var. japonicus).